The chain runs to 245 residues: 3-deoxy-manno-octulosonate cytidylyltransferase (245 aa).

This sequence belongs to the KdsB family.

Its subcellular location is the cytoplasm. It catalyses the reaction 3-deoxy-alpha-D-manno-oct-2-ulosonate + CTP = CMP-3-deoxy-beta-D-manno-octulosonate + diphosphate. It functions in the pathway nucleotide-sugar biosynthesis; CMP-3-deoxy-D-manno-octulosonate biosynthesis; CMP-3-deoxy-D-manno-octulosonate from 3-deoxy-D-manno-octulosonate and CTP: step 1/1. Its pathway is bacterial outer membrane biogenesis; lipopolysaccharide biosynthesis. Activates KDO (a required 8-carbon sugar) for incorporation into bacterial lipopolysaccharide in Gram-negative bacteria. In Elusimicrobium minutum (strain Pei191), this protein is 3-deoxy-manno-octulosonate cytidylyltransferase.